The sequence spans 166 residues: KH homology domain-containing protein 1A (166 aa).

Residues 19 to 78 (PLVFDMEEDKEDYIFGPHDEYLHTLEVHSNTLIQLERWFTPTGQTRVTVVGPLKARLWVM) enclose the KH; atypical domain.

The protein belongs to the KHDC1 family.

The protein localises to the cytoplasm. Functionally, has pro-apoptotic activity. The chain is KH homology domain-containing protein 1A (Khdc1a) from Mus musculus (Mouse).